Reading from the N-terminus, the 1241-residue chain is ATP-dependent helicase/nuclease subunit A (1241 aa).

The UvrD-like helicase ATP-binding domain maps to Ser12–Arg485. Ala33–Thr40 serves as a coordination point for ATP. Residues Gly505 to Gly805 form the UvrD-like helicase C-terminal domain.

Belongs to the helicase family. AddA subfamily. Heterodimer of AddA and AddB/RexB. The cofactor is Mg(2+).

The enzyme catalyses Couples ATP hydrolysis with the unwinding of duplex DNA by translocating in the 3'-5' direction.. The catalysed reaction is ATP + H2O = ADP + phosphate + H(+). In terms of biological role, the heterodimer acts as both an ATP-dependent DNA helicase and an ATP-dependent, dual-direction single-stranded exonuclease. Recognizes the chi site generating a DNA molecule suitable for the initiation of homologous recombination. The AddA nuclease domain is required for chi fragment generation; this subunit has the helicase and 3' -&gt; 5' nuclease activities. The protein is ATP-dependent helicase/nuclease subunit A of Bacillus cereus (strain ATCC 10987 / NRS 248).